A 256-amino-acid polypeptide reads, in one-letter code: Alcohol dehydrogenase (256 aa).

12–35 (FVAGLGGIGLDTSKELVKRDLKNL) lines the NAD(+) pocket. Ser-140 contributes to the substrate binding site. The active-site Proton acceptor is the Tyr-153.

It belongs to the short-chain dehydrogenases/reductases (SDR) family. As to quaternary structure, homodimer.

It carries out the reaction a primary alcohol + NAD(+) = an aldehyde + NADH + H(+). The enzyme catalyses a secondary alcohol + NAD(+) = a ketone + NADH + H(+). The chain is Alcohol dehydrogenase (Adh) from Drosophila teissieri (Fruit fly).